A 75-amino-acid chain; its full sequence is DNA-directed RNA polymerase subunit omega (75 aa).

Belongs to the RNA polymerase subunit omega family. The RNAP catalytic core consists of 2 alpha, 1 beta, 1 beta' and 1 omega subunit. When a sigma factor is associated with the core the holoenzyme is formed, which can initiate transcription.

The enzyme catalyses RNA(n) + a ribonucleoside 5'-triphosphate = RNA(n+1) + diphosphate. In terms of biological role, promotes RNA polymerase assembly. Latches the N- and C-terminal regions of the beta' subunit thereby facilitating its interaction with the beta and alpha subunits. The protein is DNA-directed RNA polymerase subunit omega of Thermosipho melanesiensis (strain DSM 12029 / CIP 104789 / BI429).